The primary structure comprises 138 residues: Nucleoside diphosphate kinase (138 aa).

Residues Lys9, Phe57, Arg85, Thr91, Arg102, and Asn112 each contribute to the ATP site. Catalysis depends on His115, which acts as the Pros-phosphohistidine intermediate.

The protein belongs to the NDK family. Homotetramer. Mg(2+) serves as cofactor.

The protein resides in the cytoplasm. It carries out the reaction a 2'-deoxyribonucleoside 5'-diphosphate + ATP = a 2'-deoxyribonucleoside 5'-triphosphate + ADP. The enzyme catalyses a ribonucleoside 5'-diphosphate + ATP = a ribonucleoside 5'-triphosphate + ADP. In terms of biological role, major role in the synthesis of nucleoside triphosphates other than ATP. The ATP gamma phosphate is transferred to the NDP beta phosphate via a ping-pong mechanism, using a phosphorylated active-site intermediate. The protein is Nucleoside diphosphate kinase of Trichlorobacter lovleyi (strain ATCC BAA-1151 / DSM 17278 / SZ) (Geobacter lovleyi).